A 179-amino-acid chain; its full sequence is Cytochrome b6-f complex iron-sulfur subunit 1 (179 aa).

The helical transmembrane segment at 21-43 (LLTFGTVTGVALGALYPVVNYFI) threads the bilayer. The Rieske domain occupies 61–162 (GNDVSVSKFL…AKTENDKIVL (102 aa)). [2Fe-2S] cluster contacts are provided by cysteine 108, histidine 110, cysteine 126, and histidine 129. Cysteine 113 and cysteine 128 are disulfide-bonded.

The protein belongs to the Rieske iron-sulfur protein family. In terms of assembly, the 4 large subunits of the cytochrome b6-f complex are cytochrome b6, subunit IV (17 kDa polypeptide, PetD), cytochrome f and the Rieske protein, while the 4 small subunits are PetG, PetL, PetM and PetN. The complex functions as a dimer. [2Fe-2S] cluster serves as cofactor.

The protein localises to the cellular thylakoid membrane. It carries out the reaction 2 oxidized [plastocyanin] + a plastoquinol + 2 H(+)(in) = 2 reduced [plastocyanin] + a plastoquinone + 4 H(+)(out). Its function is as follows. Component of the cytochrome b6-f complex, which mediates electron transfer between photosystem II (PSII) and photosystem I (PSI), cyclic electron flow around PSI, and state transitions. This is Cytochrome b6-f complex iron-sulfur subunit 1 from Nostoc sp. (strain PCC 7120 / SAG 25.82 / UTEX 2576).